Reading from the N-terminus, the 163-residue chain is Disulfide bond formation protein B (163 aa).

The Cytoplasmic segment spans residues 1 to 9 (MKKLTYRKI). Residues 10–26 (QSFQAIITVLVIFASFY) form a helical membrane-spanning segment. At 27-44 (LEYAAGLQPCPLCLMQRV) the chain is on the periplasmic side. C36 and C39 form a disulfide bridge. The chain crosses the membrane as a helical span at residues 45–58 (CVFILLGLMGVSLG). At 59–64 (TVKKAH) the chain is on the cytoplasmic side. A helical transmembrane segment spans residues 65 to 82 (IVSLIQFQVACAGLYFSL). Residues 83–139 (RQLWLQSLPSDQAPACMPGLDVLIQYFPWQTVAKALFWGAGDCAEVTWTMFGVSMPG) lie on the Periplasmic side of the membrane. A disulfide bridge links C98 with C125. Residues 140 to 158 (WAAMYFLSMAIMGLFLFFR) form a helical membrane-spanning segment. At 159–163 (TRTIN) the chain is on the cytoplasmic side.

Belongs to the DsbB family.

The protein resides in the cell inner membrane. In terms of biological role, required for disulfide bond formation in some periplasmic proteins. Acts by oxidizing the DsbA protein. The chain is Disulfide bond formation protein B from Legionella pneumophila (strain Lens).